Here is a 291-residue protein sequence, read N- to C-terminus: N-acetylmannosamine kinase (291 aa).

ATP-binding positions include 5–12 and 132–139; these read AIDIGGTK and GVGGGVVS. Positions 156, 166, 168, and 173 each coordinate Zn(2+).

The protein belongs to the ROK (NagC/XylR) family. NanK subfamily. In terms of assembly, homodimer.

It carries out the reaction an N-acyl-D-mannosamine + ATP = an N-acyl-D-mannosamine 6-phosphate + ADP + H(+). Its pathway is amino-sugar metabolism; N-acetylneuraminate degradation; D-fructose 6-phosphate from N-acetylneuraminate: step 2/5. Catalyzes the phosphorylation of N-acetylmannosamine (ManNAc) to ManNAc-6-P. The chain is N-acetylmannosamine kinase from Escherichia fergusonii (strain ATCC 35469 / DSM 13698 / CCUG 18766 / IAM 14443 / JCM 21226 / LMG 7866 / NBRC 102419 / NCTC 12128 / CDC 0568-73).